The following is a 270-amino-acid chain: Urease accessory protein UreD (270 aa).

This sequence belongs to the UreD family. UreD, UreF and UreG form a complex that acts as a GTP-hydrolysis-dependent molecular chaperone, activating the urease apoprotein by helping to assemble the nickel containing metallocenter of UreC. The UreE protein probably delivers the nickel.

The protein localises to the cytoplasm. Required for maturation of urease via the functional incorporation of the urease nickel metallocenter. In Beijerinckia indica subsp. indica (strain ATCC 9039 / DSM 1715 / NCIMB 8712), this protein is Urease accessory protein UreD.